The chain runs to 172 residues: Adenine phosphoribosyltransferase (172 aa).

It belongs to the purine/pyrimidine phosphoribosyltransferase family. As to quaternary structure, homodimer.

It localises to the cytoplasm. The catalysed reaction is AMP + diphosphate = 5-phospho-alpha-D-ribose 1-diphosphate + adenine. It functions in the pathway purine metabolism; AMP biosynthesis via salvage pathway; AMP from adenine: step 1/1. Functionally, catalyzes a salvage reaction resulting in the formation of AMP, that is energically less costly than de novo synthesis. The polypeptide is Adenine phosphoribosyltransferase (Ligilactobacillus salivarius (strain UCC118) (Lactobacillus salivarius)).